The following is an 89-amino-acid chain: Elongation factor 1-beta (89 aa).

Belongs to the EF-1-beta/EF-1-delta family.

Promotes the exchange of GDP for GTP in EF-1-alpha/GDP, thus allowing the regeneration of EF-1-alpha/GTP that could then be used to form the ternary complex EF-1-alpha/GTP/AAtRNA. The sequence is that of Elongation factor 1-beta from Methanococcus maripaludis (strain C6 / ATCC BAA-1332).